Reading from the N-terminus, the 507-residue chain is Cobyric acid synthase (507 aa).

A GATase cobBQ-type domain is found at 259-456 (EIQIAVIKLP…LHGIFDNGTW (198 aa)). Catalysis depends on cysteine 340, which acts as the Nucleophile. Histidine 448 is a catalytic residue.

The protein belongs to the CobB/CobQ family. CobQ subfamily.

Its pathway is cofactor biosynthesis; adenosylcobalamin biosynthesis. In terms of biological role, catalyzes amidations at positions B, D, E, and G on adenosylcobyrinic A,C-diamide. NH(2) groups are provided by glutamine, and one molecule of ATP is hydrogenolyzed for each amidation. The protein is Cobyric acid synthase of Prochlorococcus marinus (strain SARG / CCMP1375 / SS120).